We begin with the raw amino-acid sequence, 319 residues long: ATP-dependent 6-phosphofructokinase (319 aa).

Gly-11 contributes to the ATP binding site. Position 21–25 (21–25) interacts with ADP; the sequence is RAVVR. ATP contacts are provided by residues 72–73 and 102–105; these read RC and GDGS. Asp-103 serves as a coordination point for Mg(2+). 125-127 is a binding site for substrate; that stretch reads TID. Asp-127 serves as the catalytic Proton acceptor. Residue Arg-154 participates in ADP binding. Substrate contacts are provided by residues Arg-162 and 169–171; that span reads MGR. ADP contacts are provided by residues 185–187, Arg-211, and 213–215; these read GAE and KKH. Substrate-binding positions include Glu-222, Arg-243, and 249 to 252; that span reads HIQR.

The protein belongs to the phosphofructokinase type A (PFKA) family. ATP-dependent PFK group I subfamily. Prokaryotic clade 'B1' sub-subfamily. In terms of assembly, homotetramer. It depends on Mg(2+) as a cofactor.

It localises to the cytoplasm. The enzyme catalyses beta-D-fructose 6-phosphate + ATP = beta-D-fructose 1,6-bisphosphate + ADP + H(+). The protein operates within carbohydrate degradation; glycolysis; D-glyceraldehyde 3-phosphate and glycerone phosphate from D-glucose: step 3/4. Allosterically activated by ADP and other diphosphonucleosides, and allosterically inhibited by phosphoenolpyruvate. Catalyzes the phosphorylation of D-fructose 6-phosphate to fructose 1,6-bisphosphate by ATP, the first committing step of glycolysis. This is ATP-dependent 6-phosphofructokinase from Bacillus pumilus (strain SAFR-032).